A 430-amino-acid chain; its full sequence is Microtubule-associated protein tau (430 aa).

Basic and acidic residues predominate over residues 1 to 16; sequence MAEPRQEFDTAEDHAE. The tract at residues 1–245 is disordered; sequence MAEPRQEFDT…PVPMPDLKNV (245 aa). At Ala2 the chain carries N-acetylalanine. Residue Tyr18 is modified to Phosphotyrosine. Lys31 is covalently cross-linked (Glycyl lysine isopeptide (Lys-Gly) (interchain with G-Cter in ubiquitin)). Phosphoserine occurs at positions 33 and 48. A compositionally biased stretch (polar residues) spans 48 to 58; sequence SETSDAKSTPT. 3 positions are modified to phosphothreonine: Thr56, Thr58, and Thr98. Positions 117–133 are enriched in basic and acidic residues; the sequence is KGKEGTGSEDRKAKGAD. Position 142 is a phosphothreonine (Thr142). At Arg144 the chain carries Omega-N-methylarginine. Lys152 bears the N6,N6-dimethyllysine; alternate mark. Residue Lys152 is modified to N6-acetyllysine; alternate. Residues Thr158, Thr164, Thr165, and Thr170 each carry the phosphothreonine modification. Low complexity predominate over residues 161-203; the sequence is PAKTTPSPKTPPGTGEPAKSGDRSGYSSPGSPGTPGSRSRTPS. A phosphoserine mark is found at Ser180 and Ser184. Tyr186 bears the Phosphotyrosine mark. A phosphoserine mark is found at Ser187, Ser188, and Ser191. Phosphothreonine occurs at positions 194 and 201. Ser203 carries the phosphoserine modification. Thr206 is modified (phosphothreonine). Position 214 is an N6-acetyllysine (Lys214). Phosphothreonine is present on Thr220. Ser224 and Ser226 each carry phosphoserine. 4 Tau/MAP repeats span residues 233-263, 264-294, 295-325, and 326-357; these read QTAP…GGGK, VQII…GGGS, VQIV…GGGQ, and VEVK…GGGN. A Glycyl lysine isopeptide (Lys-Gly) (interchain with G-Cter in ubiquitin) cross-link involves residue Lys243. Lys248 bears the N6-acetyllysine; alternate mark. Lys248 bears the N6-methyllysine; alternate mark. Lys248 is covalently cross-linked (Glycyl lysine isopeptide (Lys-Gly) (interchain with G-Cter in ubiquitin); alternate). Residue Ser251 is modified to Phosphoserine. Residue Lys256 forms a Glycyl lysine isopeptide (Lys-Gly) (interchain with G-Cter in ubiquitin) linkage. The residue at position 270 (Lys270) is an N6-acetyllysine; alternate. Lys270 is covalently cross-linked (Glycyl lysine isopeptide (Lys-Gly) (interchain with G-Cter in ubiquitin); alternate). 2 positions are modified to phosphoserine: Ser274 and Ser278. N6-acetyllysine is present on Lys279. Cys280 and Cys311 are disulfide-bonded. A Phosphoserine modification is found at Ser282. Position 287 is an N6-acetyllysine; alternate (Lys287). Residue Lys287 forms a Glycyl lysine isopeptide (Lys-Gly) (interchain with G-Cter in ubiquitin); alternate linkage. Ser294 bears the Phosphoserine mark. Lys300 carries the N6,N6-dimethyllysine; alternate modification. N6-acetyllysine; alternate occurs at positions 300, 306, and 310. Glycyl lysine isopeptide (Lys-Gly) (interchain with G-Cter in ubiquitin); alternate cross-links involve residues Lys300, Lys306, and Lys310. Residue Ser313 is modified to Phosphoserine. 3 positions are modified to N6-acetyllysine; alternate: Lys320, Lys332, and Lys336. Residues Lys320, Lys332, and Lys336 each participate in a glycyl lysine isopeptide (Lys-Gly) (interchain with G-Cter in ubiquitin); alternate cross-link. Arg338 bears the Omega-N-methylarginine mark. The residue at position 341 (Ser341) is a Phosphoserine. Residue Lys342 forms a Glycyl lysine isopeptide (Lys-Gly) (interchain with G-Cter in ubiquitin) linkage. The residue at position 345 (Ser345) is a Phosphoserine. The residue at position 358 (Lys358) is an N6-acetyllysine; alternate. Residue Lys358 forms a Glycyl lysine isopeptide (Lys-Gly) (interchain with G-Cter in ubiquitin); alternate linkage. A Glycyl lysine isopeptide (Lys-Gly) (interchain with G-Cter in ubiquitin) cross-link involves residue Lys364. At Lys374 the chain carries N6-acetyllysine; alternate. Lys374 participates in a covalent cross-link: Glycyl lysine isopeptide (Lys-Gly) (interchain with G-Cter in ubiquitin); alternate. Position 383 is a phosphotyrosine (Tyr383). Phosphoserine is present on residues Ser385 and Ser389. Positions 387–406 are disordered; it reads VVSGDTSPRHLSNVSSTGSI. Over residues 390–406 the composition is skewed to polar residues; the sequence is GDTSPRHLSNVSSTGSI. Thr392 bears the Phosphothreonine mark. Residues Ser393, Ser398, Ser405, and Ser411 each carry the phosphoserine modification. Position 416 is a phosphothreonine (Thr416).

In terms of assembly, interacts with MARK1, MARK2, MARK3 and MARK4. Interacts with SQSTM1 when polyubiquitinated. Interacts with PSMC2 through SQSTM1. Interacts with FKBP4. Binds to CSNK1D. Interacts with SGK1. Interacts with PIN1. Interacts with LRRK2. Interacts with LRP1, leading to endocytosis; this interaction is reduced in the presence of LRPAP1/RAP. Polyubiquitinated. Requires functional TRAF6 and may provoke SQSTM1-dependent degradation by the proteasome. In terms of processing, phosphorylation at various serine and threonine residues in S-P or T-P motifs by proline-directed protein kinases (PDPK1, CDK1, CDK5, GSK3, MAPK) (a few sites per protein in interphase, more in mitosis), and at serine residues in K-X-G-S motifs by MAP/microtubule affinity-regulating kinase (MARK1, MARK2, MARK3 or MARK4), causing detachment from microtubules, and their disassembly. Phosphorylation at Ser-345 by BRSK1 and BRSK2 in neurons affects ability to bind microtubules and plays a role in neuron polarization. Phosphorylated by PHK. Dephosphorylation at several serine and threonine residues by the serine/threonine phosphatase PPP5C. Post-translationally, hyperphosphorylated (in particular at Thr-170, Ser-191, Thr-194, Ser-251, and Ser-345) during hibernation. Phosphorylation is fully reversible after arousal. Highly phosphorylated tau contains a number of paired helical filaments (PHFs)-like epitopes. PHF-like phosphorylation is not associated with fibril formation. Distribution of PHF-like tau is more intense in the entorhinal cortex, hippocampus and isocortical areas. PHF-like phosphorylation-dephosphorylation during hibernation cycle is synchronized with regression-re-establishment of afferentation. It may reflect a protective mechanism in an unfavorable environment.

The protein resides in the cytoplasm. Its subcellular location is the cytosol. It is found in the cell membrane. The protein localises to the cytoskeleton. It localises to the cell projection. The protein resides in the axon. Its subcellular location is the dendrite. Its function is as follows. Promotes microtubule assembly and stability, and might be involved in the establishment and maintenance of neuronal polarity. The C-terminus binds axonal microtubules while the N-terminus binds neural plasma membrane components, suggesting that tau functions as a linker protein between both. Axonal polarity is predetermined by tau localization (in the neuronal cell) in the domain of the cell body defined by the centrosome. The short isoforms allow plasticity of the cytoskeleton whereas the longer isoforms may preferentially play a role in its stabilization. The chain is Microtubule-associated protein tau (MAPT) from Spermophilus citellus (European ground squirrel).